A 301-amino-acid polypeptide reads, in one-letter code: uncharacterized protein (301 aa).

9 helical membrane-spanning segments follow: residues 1–21 (MSWI…LRII), 33–53 (SVLF…YVYY), 72–92 (AMSL…KIPW), 101–121 (FGII…IILI), 124–144 (FAWL…KTFY), 194–214 (VLIE…IFAI), 220–240 (IIYT…FCLA), 253–273 (LALI…IAIP), and 274–294 (EYVA…ASII).

It belongs to the TerC family.

Its subcellular location is the cell membrane. This is an uncharacterized protein from Rickettsia conorii (strain ATCC VR-613 / Malish 7).